The chain runs to 428 residues: CinA-like protein (428 aa).

Belongs to the CinA family.

This chain is CinA-like protein, found in Endomicrobium trichonymphae.